The chain runs to 651 residues: DNA ligase (651 aa).

Residues Asp30–Asp34, Ser79–Met80, and Glu105 each bind NAD(+). The active-site N6-AMP-lysine intermediate is the Lys107. 3 residues coordinate NAD(+): Arg128, Glu162, and Lys301. Zn(2+) is bound by residues Cys395, Cys398, Cys411, and Cys416. Positions Ala570–Val651 constitute a BRCT domain.

Belongs to the NAD-dependent DNA ligase family. LigA subfamily. Mg(2+) is required as a cofactor. Requires Mn(2+) as cofactor.

It catalyses the reaction NAD(+) + (deoxyribonucleotide)n-3'-hydroxyl + 5'-phospho-(deoxyribonucleotide)m = (deoxyribonucleotide)n+m + AMP + beta-nicotinamide D-nucleotide.. DNA ligase that catalyzes the formation of phosphodiester linkages between 5'-phosphoryl and 3'-hydroxyl groups in double-stranded DNA using NAD as a coenzyme and as the energy source for the reaction. It is essential for DNA replication and repair of damaged DNA. The polypeptide is DNA ligase (Campylobacter lari (strain RM2100 / D67 / ATCC BAA-1060)).